We begin with the raw amino-acid sequence, 89 residues long: Small ribosomal subunit protein uS15 (89 aa).

This sequence belongs to the universal ribosomal protein uS15 family. As to quaternary structure, part of the 30S ribosomal subunit. Forms a bridge to the 50S subunit in the 70S ribosome, contacting the 23S rRNA.

In terms of biological role, one of the primary rRNA binding proteins, it binds directly to 16S rRNA where it helps nucleate assembly of the platform of the 30S subunit by binding and bridging several RNA helices of the 16S rRNA. Its function is as follows. Forms an intersubunit bridge (bridge B4) with the 23S rRNA of the 50S subunit in the ribosome. This is Small ribosomal subunit protein uS15 from Paenarthrobacter aurescens (strain TC1).